An 838-amino-acid polypeptide reads, in one-letter code: Glutenin, high molecular weight subunit PW212 (838 aa).

Positions 1-21 (MAKRLVLFVAVVVALVALTVA) are cleaved as a signal peptide. The segment at 122-794 (SYYPGQASPQ…GQQSGQGQQG (673 aa)) is disordered. The segment covering 125–136 (PGQASPQRPGQG) has biased composition (low complexity). A compositionally biased stretch (gly residues) spans 137–149 (QQPGQGQQSGQGQ). 12 stretches are compositionally biased toward low complexity: residues 150 to 172 (QGYYPTSPQQPGQWQQPEQGQPG), 179 to 208 (QQPGQLQQPAQGQQPGQGQQGRQPGQGQPG), 215 to 245 (QLQPGQLQQPAQGQQGQQPGQGQQGQQPGQG), 268 to 308 (QGQQ…GQSG), 315 to 356 (QQPG…PGQG), 364 to 416 (PGYY…PGQG), 445 to 473 (SPQQSGQGQQPGQLQQSAQGQKGQQPGQG), 481 to 532 (QGQQ…YPTS), 549 to 643 (QQPG…QGQP), 654 to 677 (GQGQQPGQWQQPGQWQQPGQGQPG), 699 to 719 (QQPGQGQQPGQWQQSGQGQHG), and 729 to 773 (GQGQ…GQQG).

This sequence belongs to the gliadin/glutenin family. Disulfide-bridge linked aggregates.

Functionally, glutenins are high-molecular weight seed storage proteins of wheat endosperm. Thought to be responsible for the visco-elastic property of wheat dough. The polypeptide is Glutenin, high molecular weight subunit PW212 (Triticum aestivum (Wheat)).